We begin with the raw amino-acid sequence, 231 residues long: Sugar fermentation stimulation protein homolog (231 aa).

Belongs to the SfsA family.

In Geotalea daltonii (strain DSM 22248 / JCM 15807 / FRC-32) (Geobacter daltonii), this protein is Sugar fermentation stimulation protein homolog.